Reading from the N-terminus, the 77-residue chain is Acyl carrier protein (77 aa).

The region spanning 2–77 (SDIADRVKKI…DAVKFISEAA (76 aa)) is the Carrier domain. Ser-37 bears the O-(pantetheine 4'-phosphoryl)serine mark.

It belongs to the acyl carrier protein (ACP) family. Post-translationally, 4'-phosphopantetheine is transferred from CoA to a specific serine of apo-ACP by AcpS. This modification is essential for activity because fatty acids are bound in thioester linkage to the sulfhydryl of the prosthetic group.

The protein localises to the cytoplasm. It functions in the pathway lipid metabolism; fatty acid biosynthesis. In terms of biological role, carrier of the growing fatty acid chain in fatty acid biosynthesis. The polypeptide is Acyl carrier protein (Cereibacter sphaeroides (strain ATCC 17029 / ATH 2.4.9) (Rhodobacter sphaeroides)).